Here is a 239-residue protein sequence, read N- to C-terminus: Urease accessory protein UreE (239 aa).

The disordered stretch occupies residues 185-239 (VASPLDEPHGSGLHIHGIHSHGDGHSHSHDSHSHSHDSDHGHSHSHGDHDHDHKH). The span at 204–239 (SHGDGHSHSHDSHSHSHDSDHGHSHSHGDHDHDHKH) shows a compositional bias: basic and acidic residues.

This sequence belongs to the UreE family.

Its subcellular location is the cytoplasm. Involved in urease metallocenter assembly. Binds nickel. Probably functions as a nickel donor during metallocenter assembly. The sequence is that of Urease accessory protein UreE from Yersinia frederiksenii.